Reading from the N-terminus, the 287-residue chain is Inorganic pyrophosphatase (287 aa).

A diphosphate-binding site is contributed by R80. Mg(2+) contacts are provided by D117, D122, and D154.

It belongs to the PPase family. Requires Mg(2+) as cofactor.

Its subcellular location is the cytoplasm. It catalyses the reaction diphosphate + H2O = 2 phosphate + H(+). The sequence is that of Inorganic pyrophosphatase (IPP1) from Yarrowia lipolytica (strain CLIB 122 / E 150) (Yeast).